Consider the following 146-residue polypeptide: 3-hydroxyacyl-[acyl-carrier-protein] dehydratase FabZ (146 aa).

The active site involves His-49.

The protein belongs to the thioester dehydratase family. FabZ subfamily.

It is found in the cytoplasm. It carries out the reaction a (3R)-hydroxyacyl-[ACP] = a (2E)-enoyl-[ACP] + H2O. Its function is as follows. Involved in unsaturated fatty acids biosynthesis. Catalyzes the dehydration of short chain beta-hydroxyacyl-ACPs and long chain saturated and unsaturated beta-hydroxyacyl-ACPs. This is 3-hydroxyacyl-[acyl-carrier-protein] dehydratase FabZ from Pseudomonas fluorescens (strain Pf0-1).